A 396-amino-acid chain; its full sequence is 1-deoxy-D-xylulose 5-phosphate reductoisomerase (396 aa).

Residues T15, G16, I18, and N127 each contribute to the NADPH site. K128 is a binding site for 1-deoxy-D-xylulose 5-phosphate. E129 is an NADPH binding site. D153 is a binding site for Mn(2+). Positions 154, 155, 177, and 200 each coordinate 1-deoxy-D-xylulose 5-phosphate. Position 155 (E155) interacts with Mn(2+). Position 206 (G206) interacts with NADPH. Residues S213, N218, K219, and E222 each contribute to the 1-deoxy-D-xylulose 5-phosphate site. E222 lines the Mn(2+) pocket.

It belongs to the DXR family. It depends on Mg(2+) as a cofactor. Requires Mn(2+) as cofactor.

It catalyses the reaction 2-C-methyl-D-erythritol 4-phosphate + NADP(+) = 1-deoxy-D-xylulose 5-phosphate + NADPH + H(+). The protein operates within isoprenoid biosynthesis; isopentenyl diphosphate biosynthesis via DXP pathway; isopentenyl diphosphate from 1-deoxy-D-xylulose 5-phosphate: step 1/6. Functionally, catalyzes the NADPH-dependent rearrangement and reduction of 1-deoxy-D-xylulose-5-phosphate (DXP) to 2-C-methyl-D-erythritol 4-phosphate (MEP). The chain is 1-deoxy-D-xylulose 5-phosphate reductoisomerase from Anaplasma marginale (strain Florida).